Here is a 239-residue protein sequence, read N- to C-terminus: Phosducin-like protein 3 (239 aa).

Met1 bears the N-acetylmethionine mark. The 149-residue stretch at 32 to 180 (EAEEEQRILQ…EGDIKAQFIG (149 aa)) folds into the Phosducin domain. Phosphoserine is present on residues Ser43, Ser234, and Ser236. The interval 91-239 (FGEVLEISGK…MKRDSDSEGD (149 aa)) is thioredoxin fold.

This sequence belongs to the phosducin family. In terms of assembly, interacts (via thioredoxin fold region) with KDR/VEGFR2 (via juxtamembrane domain). Forms ternary complexes with the chaperonin CCT complex and actin substrate, leading to inhibition of actin folding. Interacts with XIAP (via BIR 3 and RING domain). Interacts with HSP90AA1 and HSP90AB1. In terms of processing, N-terminal methionine acetylation destabilizes the protein.

It is found in the cytoplasm. The protein localises to the perinuclear region. The protein resides in the endoplasmic reticulum. Acts as a chaperone for the angiogenic VEGF receptor KDR/VEGFR2, increasing its abundance by inhibiting its ubiquitination and degradation. Inhibits the folding activity of the chaperonin-containing T-complex (CCT) which leads to inhibition of cytoskeletal actin folding. Acts as a chaperone during heat shock alongside HSP90 and HSP40/70 chaperone complexes. Modulates the activation of caspases during apoptosis. In Pongo abelii (Sumatran orangutan), this protein is Phosducin-like protein 3 (PDCL3).